We begin with the raw amino-acid sequence, 214 residues long: Dephospho-CoA kinase (214 aa).

The DPCK domain occupies 3 to 202 (KIGLTGGIGS…DRWLALAGAA (200 aa)). 11–16 (GSGKSR) contacts ATP.

Belongs to the CoaE family.

The protein localises to the cytoplasm. The enzyme catalyses 3'-dephospho-CoA + ATP = ADP + CoA + H(+). The protein operates within cofactor biosynthesis; coenzyme A biosynthesis; CoA from (R)-pantothenate: step 5/5. Functionally, catalyzes the phosphorylation of the 3'-hydroxyl group of dephosphocoenzyme A to form coenzyme A. The sequence is that of Dephospho-CoA kinase from Bordetella bronchiseptica (strain ATCC BAA-588 / NCTC 13252 / RB50) (Alcaligenes bronchisepticus).